A 144-amino-acid polypeptide reads, in one-letter code: Cytochrome c-type biogenesis protein CcmE (144 aa).

The Cytoplasmic portion of the chain corresponds to M1–R7. A helical; Signal-anchor for type II membrane protein transmembrane segment spans residues A8–A28. Residues L29 to K144 lie on the Periplasmic side of the membrane. The heme site is built by H121 and Y125.

It belongs to the CcmE/CycJ family.

The protein resides in the cell inner membrane. Its function is as follows. Heme chaperone required for the biogenesis of c-type cytochromes. Transiently binds heme delivered by CcmC and transfers the heme to apo-cytochromes in a process facilitated by CcmF and CcmH. This is Cytochrome c-type biogenesis protein CcmE from Polynucleobacter necessarius subsp. necessarius (strain STIR1).